A 188-amino-acid polypeptide reads, in one-letter code: Large ribosomal subunit protein bL32m (188 aa).

Zn(2+) contacts are provided by C110, C113, C123, and C126. Residues 162-188 (GETPSEHDQGKRIIERERKRPSWFTQN) form a disordered region. Basic and acidic residues predominate over residues 165-181 (PSEHDQGKRIIERERKR).

Belongs to the bacterial ribosomal protein bL32 family. Component of the mitochondrial ribosome large subunit (39S) which comprises a 16S rRNA and about 50 distinct proteins. Post-translationally, MRPL32 precursor is processed by the m-AAA protease (composed of AFG3L2 and SPG7), which cleaves the N-terminal transit peptide. Cleavage by the m-AAA protease takes place prior to assembly into the large subunit, an essential step for mitochondrial ribosome (mitoribosome) assembly. Proper processing by the m-AAA protease is dependent on the zinc-binding region within the tightly folded C-terminal domain of MRPL32: zinc-dependent folding halts degradation initiated from the N-terminus and triggers the release of mature MRPL32.

It localises to the mitochondrion. Functionally, component of the mitochondrial large ribosomal subunit (mt-LSU). The mitochondrial ribosome (mitoribosome) is a large ribonucleoprotein complex responsible for the synthesis of proteins inside mitochondria. The chain is Large ribosomal subunit protein bL32m (MRPL32) from Bos taurus (Bovine).